A 344-amino-acid chain; its full sequence is MLNALYPLVRPALFSMDAEDAHHFTLNNLLRAHRMGLAGCIGNRIADDPRTVMGVRFPNPVGLAAGLDKDGAYIDGLAAFGFGFIEVGTVTPRAQPGNPRPRMFRLPQADALINRMGFNNGGVDAFVANVRASRWKAEGGVLGLNIGKNADTPIERANDDYLYCLERVYPHASYVTVNISSPNTKNLRQLQGASELDSLLSTLKDAQQRLADQHKRYVPLALKIAPDLDADQIGNIGDALVRHKIDGVIATNTTISREAVKGLPHAEEAGGLSGRPVFEASTRVVRALHGVVGDAVPIIGVGGIFGGADARAKIDAGAKLVQVYSGLIYRGPALVRECAAALRG.

Residues 65–69 (AGLDK) and Thr89 contribute to the FMN site. Lys69 lines the substrate pocket. 114–118 (NRMGF) is a binding site for substrate. 2 residues coordinate FMN: Asn145 and Asn178. Asn178 contributes to the substrate binding site. Catalysis depends on Ser181, which acts as the Nucleophile. Asn183 contacts substrate. Positions 223 and 251 each coordinate FMN. Residue 252–253 (NT) coordinates substrate. Residues Gly274, Gly303, and 324-325 (YS) contribute to the FMN site.

This sequence belongs to the dihydroorotate dehydrogenase family. Type 2 subfamily. In terms of assembly, monomer. FMN is required as a cofactor.

The protein resides in the cell membrane. The catalysed reaction is (S)-dihydroorotate + a quinone = orotate + a quinol. It participates in pyrimidine metabolism; UMP biosynthesis via de novo pathway; orotate from (S)-dihydroorotate (quinone route): step 1/1. Its function is as follows. Catalyzes the conversion of dihydroorotate to orotate with quinone as electron acceptor. The protein is Dihydroorotate dehydrogenase (quinone) of Cupriavidus necator (strain ATCC 17699 / DSM 428 / KCTC 22496 / NCIMB 10442 / H16 / Stanier 337) (Ralstonia eutropha).